Reading from the N-terminus, the 310-residue chain is Malate dehydrogenase (310 aa).

Residues 7–12 and D32 each bind NAD(+); that span reads GAGNVG. The substrate site is built by R81 and R87. Residues N94 and 117 to 119 contribute to the NAD(+) site; that span reads VSN. Positions 119 and 150 each coordinate substrate. H174 acts as the Proton acceptor in catalysis.

The protein belongs to the LDH/MDH superfamily. MDH type 3 family. As to quaternary structure, homotetramer; arranged as a dimer of dimers.

It carries out the reaction (S)-malate + NAD(+) = oxaloacetate + NADH + H(+). Its function is as follows. Catalyzes the reversible oxidation of malate to oxaloacetate. This chain is Malate dehydrogenase, found in Chlorobaculum parvum (strain DSM 263 / NCIMB 8327) (Chlorobium vibrioforme subsp. thiosulfatophilum).